A 316-amino-acid chain; its full sequence is Ninja-family protein 2 (316 aa).

2 disordered regions span residues 1–29 (MASR…GEPD) and 72–236 (TSDD…TSTG). Over residues 99 to 108 (ERWRRREMQS) the composition is skewed to basic and acidic residues. Polar residues predominate over residues 156–166 (DQGNTSSSMPE). 2 stretches are compositionally biased toward low complexity: residues 179–199 (SSME…QNKS) and 222–235 (LRTL…TTST).

Belongs to the Ninja family.

Its subcellular location is the nucleus. The chain is Ninja-family protein 2 (AFP-B1) from Triticum aestivum (Wheat).